We begin with the raw amino-acid sequence, 923 residues long: Rap guanine nucleotide exchange factor 3 (923 aa).

At serine 79 the chain carries Phosphoserine. The 77-residue stretch at 110 to 186 (ATCPNLIRDR…RDAQFYRFPG (77 aa)) folds into the DEP domain. Residues 218–242 (TVALRKPPGQRTDEELDLIFEELLH) form an interaction with PDE3B region. Residues 311–314 (GQLA) and 321–322 (RA) contribute to the 3',5'-cyclic AMP site. The 135-residue stretch at 384-518 (NRYTVMSGTP…EQWPERRRCH (135 aa)) folds into the N-terminal Ras-GEF domain. The interaction with PDE3B stretch occupies residues 398-422 (ELLLEAMGPDSSAHDPTETFLSDFL). A phosphoserine mark is found at serine 528 and serine 864. One can recognise a Ras-GEF domain in the interval 662–889 (SAKDLAGQLT…ARISTCSEQS (228 aa)).

In terms of assembly, interacts with PDE3B and PIK3R6; form a signaling complex that regulates phosphatidylinositol 3-kinase gamma in angiogenesis. Widely expressed with highest levels in adult kidney, heart, thyroid and brain, and fetal kidney.

It localises to the endomembrane system. Guanine nucleotide exchange factor (GEF) for RAP1A and RAP2A small GTPases that is activated by binding cAMP. Through simultaneous binding of PDE3B to RAPGEF3 and PIK3R6 is assembled in a signaling complex in which it activates the PI3K gamma complex and which is involved in angiogenesis. Plays a role in the modulation of the cAMP-induced dynamic control of endothelial barrier function through a pathway that is independent on Rho-mediated signaling. Required for the actin rearrangement at cell-cell junctions, such as stress fibers and junctional actin. The protein is Rap guanine nucleotide exchange factor 3 (RAPGEF3) of Homo sapiens (Human).